A 257-amino-acid polypeptide reads, in one-letter code: Phycoerythrobilin:ferredoxin oxidoreductase (257 aa).

Belongs to the HY2 family.

It carries out the reaction (3Z)-phycoerythrobilin + oxidized 2[4Fe-4S]-[ferredoxin] = 15,16-dihydrobiliverdin + reduced 2[4Fe-4S]-[ferredoxin] + 2 H(+). Its function is as follows. Catalyzes the two-electron reduction of the C2 and C3(1) diene system of 15,16-dihydrobiliverdin. The sequence is that of Phycoerythrobilin:ferredoxin oxidoreductase (pebB) from Prochlorococcus marinus (strain SARG / CCMP1375 / SS120).